Consider the following 317-residue polypeptide: o-succinylbenzoate synthase (317 aa).

Residues 71 to 73 and Lys-95 each bind 2-succinylbenzoate; that span reads NAT. The active-site Proton donor is the Lys-97. Mg(2+) contacts are provided by Asp-128, Glu-154, and Asp-177. 128–130 contacts 2-succinylbenzoate; the sequence is DVN. Lys-201 is a 2-succinylbenzoate binding site. Lys-201 acts as the Proton acceptor in catalysis.

Belongs to the mandelate racemase/muconate lactonizing enzyme family. MenC type 1 subfamily. As to quaternary structure, monomer. Requires a divalent metal cation as cofactor.

The enzyme catalyses (1R,6R)-6-hydroxy-2-succinyl-cyclohexa-2,4-diene-1-carboxylate = 2-succinylbenzoate + H2O. It participates in quinol/quinone metabolism; 1,4-dihydroxy-2-naphthoate biosynthesis; 1,4-dihydroxy-2-naphthoate from chorismate: step 4/7. It functions in the pathway quinol/quinone metabolism; menaquinone biosynthesis. Functionally, converts 2-succinyl-6-hydroxy-2,4-cyclohexadiene-1-carboxylate (SHCHC) to 2-succinylbenzoate (OSB). Does not show N-succinylamino acid racemase (NSAR) activity with N-succinyl-L-phenylglycine as substrate. The sequence is that of o-succinylbenzoate synthase from Thermobifida fusca (strain YX).